A 499-amino-acid chain; its full sequence is Trichoplein keratin filament-binding protein (499 aa).

Coiled-coil stretches lie at residues 17–143, 169–304, and 405–485; these read LEQQ…LYEQ, EQIT…LSAL, and NRER…TQRG. The tract at residues 260-426 is trichohyalin/plectin homology domain; sequence RKMEQCRKKT…RQFTSREKKQ (167 aa).

It belongs to the TCHP family.

Its subcellular location is the cytoplasm. It is found in the cytoskeleton. The protein resides in the microtubule organizing center. The protein localises to the centrosome. In terms of biological role, may act as a 'capping' or 'branching' protein for keratin filaments in the cell periphery. May regulate K8/K18 filament and desmosome organization mainly at the apical or peripheral regions of simple epithelial cells. This chain is Trichoplein keratin filament-binding protein, found in Xenopus laevis (African clawed frog).